A 265-amino-acid chain; its full sequence is MLMQSIYLSKIREQNPLIHNITNIVAANFSANGLLALGASPLMSANIEEMQEVPKISQVLVINIGTLIGKDREAMLQAGKTANEVGIPVVLDPVGVGATSYRRETIRQLLAEVKFALIRGNAGELAAIAGETWQAKGVDAGQGEVDLKAVAEKVAQRYGCTVLISGAVDIVSDGTQTATVHNGTSLFPKVTASGCLLSAVCAAFLAVSEGNYFSATLEACVAYTIAGECAAQGLTTQVGQFQIRLLDELAALSPETIGQRGRINE.

Met-43 serves as a coordination point for substrate. The ATP site is built by Arg-119 and Ser-165. Residue Ala-192 coordinates substrate.

It belongs to the Thz kinase family. Requires Mg(2+) as cofactor.

It carries out the reaction 5-(2-hydroxyethyl)-4-methylthiazole + ATP = 4-methyl-5-(2-phosphooxyethyl)-thiazole + ADP + H(+). It participates in cofactor biosynthesis; thiamine diphosphate biosynthesis; 4-methyl-5-(2-phosphoethyl)-thiazole from 5-(2-hydroxyethyl)-4-methylthiazole: step 1/1. Functionally, catalyzes the phosphorylation of the hydroxyl group of 4-methyl-5-beta-hydroxyethylthiazole (THZ). This is Hydroxyethylthiazole kinase from Haemophilus influenzae (strain 86-028NP).